Reading from the N-terminus, the 410-residue chain is Lipoyl synthase, mitochondrial (410 aa).

C134, C139, C145, C165, C169, C172, and S390 together coordinate [4Fe-4S] cluster. The Radical SAM core domain occupies 148–379 (AGKSTAATAT…AKIGNDLGFL (232 aa)).

The protein belongs to the radical SAM superfamily. Lipoyl synthase family. The cofactor is [4Fe-4S] cluster.

It localises to the mitochondrion. The enzyme catalyses [[Fe-S] cluster scaffold protein carrying a second [4Fe-4S](2+) cluster] + N(6)-octanoyl-L-lysyl-[protein] + 2 oxidized [2Fe-2S]-[ferredoxin] + 2 S-adenosyl-L-methionine + 4 H(+) = [[Fe-S] cluster scaffold protein] + N(6)-[(R)-dihydrolipoyl]-L-lysyl-[protein] + 4 Fe(3+) + 2 hydrogen sulfide + 2 5'-deoxyadenosine + 2 L-methionine + 2 reduced [2Fe-2S]-[ferredoxin]. Its pathway is protein modification; protein lipoylation via endogenous pathway; protein N(6)-(lipoyl)lysine from octanoyl-[acyl-carrier-protein]: step 2/2. In terms of biological role, catalyzes the radical-mediated insertion of two sulfur atoms into the C-6 and C-8 positions of the octanoyl moiety bound to the lipoyl domains of lipoate-dependent enzymes, thereby converting the octanoylated domains into lipoylated derivatives. This chain is Lipoyl synthase, mitochondrial, found in Schistosoma mansoni (Blood fluke).